We begin with the raw amino-acid sequence, 563 residues long: Arginine--tRNA ligase (563 aa).

The short motif at P120 to H130 is the 'HIGH' region element.

It belongs to the class-I aminoacyl-tRNA synthetase family. As to quaternary structure, monomer.

Its subcellular location is the cytoplasm. It carries out the reaction tRNA(Arg) + L-arginine + ATP = L-arginyl-tRNA(Arg) + AMP + diphosphate. This chain is Arginine--tRNA ligase, found in Clostridium botulinum (strain Loch Maree / Type A3).